The following is a 671-amino-acid chain: DNA ligase (671 aa).

Residues 34-38, 83-84, and Glu117 each bind NAD(+); these read DAEYD and SL. The active-site N6-AMP-lysine intermediate is the Lys119. NAD(+) is bound by residues Arg140, Glu177, Lys293, and Lys317. Positions 411, 414, 429, and 434 each coordinate Zn(2+). One can recognise a BRCT domain in the interval 591 to 671; that stretch reads KVGGKFTGKT…EFLQMLEGEQ (81 aa).

This sequence belongs to the NAD-dependent DNA ligase family. LigA subfamily. Requires Mg(2+) as cofactor. The cofactor is Mn(2+).

It catalyses the reaction NAD(+) + (deoxyribonucleotide)n-3'-hydroxyl + 5'-phospho-(deoxyribonucleotide)m = (deoxyribonucleotide)n+m + AMP + beta-nicotinamide D-nucleotide.. Its function is as follows. DNA ligase that catalyzes the formation of phosphodiester linkages between 5'-phosphoryl and 3'-hydroxyl groups in double-stranded DNA using NAD as a coenzyme and as the energy source for the reaction. It is essential for DNA replication and repair of damaged DNA. In Geobacter metallireducens (strain ATCC 53774 / DSM 7210 / GS-15), this protein is DNA ligase.